The sequence spans 305 residues: Coenzyme PQQ synthesis protein B (305 aa).

The protein belongs to the PqqB family.

Its pathway is cofactor biosynthesis; pyrroloquinoline quinone biosynthesis. Functionally, may be involved in the transport of PQQ or its precursor to the periplasm. This is Coenzyme PQQ synthesis protein B from Cupriavidus taiwanensis (strain DSM 17343 / BCRC 17206 / CCUG 44338 / CIP 107171 / LMG 19424 / R1) (Ralstonia taiwanensis (strain LMG 19424)).